A 993-amino-acid chain; its full sequence is General transcription factor II-I repeat domain-containing protein 1 (993 aa).

GTF2I-like repeat units follow at residues 117–211 and 332–426; these read LGPT…EPKS and LRET…DGTT. Positions 461 to 480 are disordered; sequence GSRSEKSSISDECEPGTSSE. GTF2I-like repeat units follow at residues 597–691, 727–821, and 824–918; these read DGIG…LEDC, LSRI…RPDD, and ANRL…ICSE. The tract at residues 916–961 is disordered; that stretch reads CSEPPKIKNGNTGPKRKRKRVSEGNSISSASSNCSSSSSSSSNMDP. A Nuclear localization signal motif is present at residues 929–936; the sequence is PKRKRKRV. Positions 938–961 are enriched in low complexity; that stretch reads EGNSISSASSNCSSSSSSSSNMDP.

It belongs to the TFII-I family. Interacts (via repeats 4-5) with foxh1/fast1 (via Fork-head domain). Interacts with smad2 and smad3 (via MH1 domain) in a ligand (activin)-dependent manner. Interacts with pou5f1.1/oct-25 to form a repression complex on the promoters of the gsc and mix2 genes. As to expression, uniformly expressed in the embryo in pre- and early gastrula stages. Enriched in the head region of early neurula through tailbud stages.

It localises to the nucleus. In terms of biological role, transcription factor that activates a subset of organizer-specific genes. Binds to the distal element (DE) of the gsc promoter to regulate its expression. In the presence of pou5f1.1/oct-25, forms a repression complex on the promoter of the gsc and mix2 genes to inhibit their transcription. This is General transcription factor II-I repeat domain-containing protein 1 (gtf2ird1) from Xenopus laevis (African clawed frog).